Consider the following 264-residue polypeptide: Thymidylate synthase (264 aa).

Residue Arg21 coordinates dUMP. His51 contributes to the (6R)-5,10-methylene-5,6,7,8-tetrahydrofolate binding site. DUMP is bound at residue 126-127; the sequence is RR. Residue Cys146 is the Nucleophile of the active site. Residues 166–169, Asn177, and 207–209 each bind dUMP; these read RSAD and HLY. Asp169 is a (6R)-5,10-methylene-5,6,7,8-tetrahydrofolate binding site. (6R)-5,10-methylene-5,6,7,8-tetrahydrofolate is bound at residue Ala263.

The protein belongs to the thymidylate synthase family. Bacterial-type ThyA subfamily. Homodimer.

Its subcellular location is the cytoplasm. The catalysed reaction is dUMP + (6R)-5,10-methylene-5,6,7,8-tetrahydrofolate = 7,8-dihydrofolate + dTMP. Its pathway is pyrimidine metabolism; dTTP biosynthesis. Its function is as follows. Catalyzes the reductive methylation of 2'-deoxyuridine-5'-monophosphate (dUMP) to 2'-deoxythymidine-5'-monophosphate (dTMP) while utilizing 5,10-methylenetetrahydrofolate (mTHF) as the methyl donor and reductant in the reaction, yielding dihydrofolate (DHF) as a by-product. This enzymatic reaction provides an intracellular de novo source of dTMP, an essential precursor for DNA biosynthesis. This chain is Thymidylate synthase, found in Cytophaga hutchinsonii (strain ATCC 33406 / DSM 1761 / CIP 103989 / NBRC 15051 / NCIMB 9469 / D465).